A 555-amino-acid polypeptide reads, in one-letter code: Phosphomethylpyrimidine synthase (555 aa).

Residues Asn-191, Met-220, Tyr-249, His-285, Ser-305–Gly-307, Asp-346–Arg-349, and Glu-385 each bind substrate. Position 389 (His-389) interacts with Zn(2+). Tyr-412 is a substrate binding site. His-453 contributes to the Zn(2+) binding site. [4Fe-4S] cluster contacts are provided by Cys-533, Cys-536, and Cys-541.

It belongs to the ThiC family. Homodimer. [4Fe-4S] cluster is required as a cofactor.

The enzyme catalyses 5-amino-1-(5-phospho-beta-D-ribosyl)imidazole + S-adenosyl-L-methionine = 4-amino-2-methyl-5-(phosphooxymethyl)pyrimidine + CO + 5'-deoxyadenosine + formate + L-methionine + 3 H(+). It functions in the pathway cofactor biosynthesis; thiamine diphosphate biosynthesis. Catalyzes the synthesis of the hydroxymethylpyrimidine phosphate (HMP-P) moiety of thiamine from aminoimidazole ribotide (AIR) in a radical S-adenosyl-L-methionine (SAM)-dependent reaction. In Ehrlichia ruminantium (strain Welgevonden), this protein is Phosphomethylpyrimidine synthase.